Reading from the N-terminus, the 452-residue chain is Transcription factor PERIANTHIA (452 aa).

Residues Asp-164–Leu-227 enclose the bZIP domain. The segment at Arg-166–Lys-186 is basic motif. The tract at residues Leu-192–Leu-206 is leucine-zipper. Residues Val-233–Arg-449 enclose the DOG1 domain.

This sequence belongs to the bZIP family. Interacts with GRXC7/ROXY1. Interacts with BOP1 and BOP2.

It localises to the nucleus. Its function is as follows. Transcriptional activator involved in the determination of floral organ number. Acts to determine floral organ patterning by establishing floral organ primordia in specific numbers and positions. Plays a role in regulating stem cell fate by directly controlling AG expression. Binds to the 5'-AAGAAT-3' cis-acting element found in AG promoter. Might represent a target for a post-translational modification by GRXC7/ROXY1. The chain is Transcription factor PERIANTHIA (PAN) from Arabidopsis thaliana (Mouse-ear cress).